We begin with the raw amino-acid sequence, 130 residues long: Small ribosomal subunit protein uS8 (130 aa).

This sequence belongs to the universal ribosomal protein uS8 family. In terms of assembly, part of the 30S ribosomal subunit.

One of the primary rRNA binding proteins, it binds directly to 16S rRNA central domain where it helps coordinate assembly of the platform of the 30S subunit. The protein is Small ribosomal subunit protein uS8 of Methanosarcina mazei (strain ATCC BAA-159 / DSM 3647 / Goe1 / Go1 / JCM 11833 / OCM 88) (Methanosarcina frisia).